The primary structure comprises 143 residues: Lysozyme C (143 aa).

Residues 1-15 (MKIPVFLLLLALANA) form the signal peptide. Residues 16 to 143 (KVFQRCEWAR…LSAYIAGCGL (128 aa)) enclose the C-type lysozyme domain. Disulfide bonds link cysteine 21–cysteine 141, cysteine 45–cysteine 129, cysteine 79–cysteine 94, and cysteine 90–cysteine 108. Catalysis depends on residues glutamate 50 and aspartate 67.

The protein belongs to the glycosyl hydrolase 22 family. Monomer.

It is found in the secreted. It carries out the reaction Hydrolysis of (1-&gt;4)-beta-linkages between N-acetylmuramic acid and N-acetyl-D-glucosamine residues in a peptidoglycan and between N-acetyl-D-glucosamine residues in chitodextrins.. In terms of biological role, lysozymes have primarily a bacteriolytic function; those in tissues and body fluids are associated with the monocyte-macrophage system and enhance the activity of immunoagents. This is Lysozyme C from Takifugu rubripes (Japanese pufferfish).